We begin with the raw amino-acid sequence, 898 residues long: Translation initiation factor IF-2 (898 aa).

2 disordered regions span residues 51–70 and 114–303; these read RKSHGAEDEGSGKKITLKRK and LAAE…KQHG. Basic and acidic residues-rich tracts occupy residues 114–171 and 184–258; these read LAAE…EKSK and PAKE…DDKG. The 170-residue stretch at 398 to 567 folds into the tr-type G domain; it reads HRAPVVTIMG…LLQSELLELQ (170 aa). The tract at residues 407-414 is G1; sequence GHVDHGKT. Residue 407-414 participates in GTP binding; the sequence is GHVDHGKT. A G2 region spans residues 432 to 436; the sequence is GITQH. The interval 453–456 is G3; it reads DTPG. GTP-binding positions include 453–457 and 507–510; these read DTPGH and NKID. The G4 stretch occupies residues 507-510; the sequence is NKID. Positions 543-545 are G5; the sequence is SAH.

The protein belongs to the TRAFAC class translation factor GTPase superfamily. Classic translation factor GTPase family. IF-2 subfamily.

The protein resides in the cytoplasm. Functionally, one of the essential components for the initiation of protein synthesis. Protects formylmethionyl-tRNA from spontaneous hydrolysis and promotes its binding to the 30S ribosomal subunits. Also involved in the hydrolysis of GTP during the formation of the 70S ribosomal complex. This is Translation initiation factor IF-2 from Alcanivorax borkumensis (strain ATCC 700651 / DSM 11573 / NCIMB 13689 / SK2).